A 298-amino-acid polypeptide reads, in one-letter code: KH domain-containing protein At1g09660/At1g09670 (298 aa).

The KH domain maps to 152-219 (DVPVDKYPSY…EHLCEPLHVL (68 aa)). The segment at 266 to 298 (NGTLREESPSPSLSPCLSPSMSPFNSKRAKTEI) is disordered. 2 positions are modified to phosphoserine: S273 and S287. Residues 274–288 (PSPSLSPCLSPSMSP) show a composition bias toward low complexity.

It is found in the nucleus. The protein is KH domain-containing protein At1g09660/At1g09670 of Arabidopsis thaliana (Mouse-ear cress).